The chain runs to 178 residues: ATP-dependent protease subunit HslV (178 aa).

Residue T7 is part of the active site. Residues G162, C165, and T168 each coordinate Na(+).

Belongs to the peptidase T1B family. HslV subfamily. In terms of assembly, a double ring-shaped homohexamer of HslV is capped on each side by a ring-shaped HslU homohexamer. The assembly of the HslU/HslV complex is dependent on binding of ATP.

It localises to the cytoplasm. It catalyses the reaction ATP-dependent cleavage of peptide bonds with broad specificity.. Allosterically activated by HslU binding. Its function is as follows. Protease subunit of a proteasome-like degradation complex believed to be a general protein degrading machinery. The sequence is that of ATP-dependent protease subunit HslV from Janthinobacterium sp. (strain Marseille) (Minibacterium massiliensis).